A 315-amino-acid chain; its full sequence is Rab effector Noc2 (315 aa).

Residues 41 to 158 enclose the RabBD domain; that stretch reads QRRKQHLSPA…KRSGAWFYKG (118 aa). The segment at 89–146 adopts an FYVE-type zinc-finger fold; that stretch reads GNGLSQCLLCGEVLGFLGSSSVFCKDCRKKVCTKCGIEASPGQKRPLWLCKICSEQRE. Zn(2+) is bound by residues Cys-95, Cys-98, Cys-112, Cys-115, Cys-120, Cys-123, Cys-138, and Cys-141. Positions 170–315 are disordered; that stretch reads GRADDPHFRP…APAGPSSCLG (146 aa). 2 stretches are compositionally biased toward basic and acidic residues: residues 184-193 and 221-240; these read PAEREPRSSE and LEDRLPSTGVRDRKGDKPWK. The span at 262 to 275 shows a compositional bias: polar residues; sequence GCQSSLASGETGTG. The span at 298 to 315 shows a compositional bias: low complexity; that stretch reads GRAPAADAAPAGPSSCLG.

In terms of assembly, recruited to dense-core vesicles through specific interaction with RAB27A in endocrine cells. Interacts with RAB3A, RAB3B, RAB3C and RAB3D. Interacts with ZYX. As to expression, moderate to high levels of expression in thyroid, ovary, stomach, heart, pancreas, skeletal muscle, kidney and liver. Also detected in epithelial cells.

Its subcellular location is the cytoplasm. The protein resides in the cytoplasmic vesicle. The protein localises to the secretory vesicle membrane. Rab GTPase effector involved in the late steps of regulated exocytosis, both in endocrine and exocrine cells. Acts as a potential RAB3B effector protein in epithelial cells. This chain is Rab effector Noc2 (RPH3AL), found in Homo sapiens (Human).